The following is a 234-amino-acid chain: MKNMLLMSGSKYQNTDYLVHTLPWLQDFLADYQGKTVAFVPYAGVRQSYDEYELKVQKALAELNVAILSVHRAEKHAEIIEKADVIAIGGGNTFCLLKGMYEHHLLPLIREKVQSGTPYFGWSAGANVAGRSIMTTNDMPITYPPSFDALNLFPHQLNPHFISGKPAGHNGESREERLAEFLIVNPTANVYALPEGTALHIQGQQARVLGQHDVLLFSENMQLATLPVNSVFDY.

Catalysis depends on charge relay system residues Ser-123, Asp-138, and His-160.

It belongs to the peptidase S51 family.

The protein localises to the cytoplasm. The enzyme catalyses Dipeptidase E catalyzes the hydrolysis of dipeptides Asp-|-Xaa. It does not act on peptides with N-terminal Glu, Asn or Gln, nor does it cleave isoaspartyl peptides.. Hydrolyzes dipeptides containing N-terminal aspartate residues. May play a role in allowing the cell to use peptide aspartate to spare carbon otherwise required for the synthesis of the aspartate family of amino acids. The sequence is that of Peptidase E from Pasteurella multocida (strain Pm70).